Here is a 38-residue protein sequence, read N- to C-terminus: Photosystem II reaction center protein L (38 aa).

Residues 17 to 37 traverse the membrane as a helical segment; the sequence is SLYWGLLLIFVLAVLFSSYFF.

This sequence belongs to the PsbL family. In terms of assembly, PSII is composed of 1 copy each of membrane proteins PsbA, PsbB, PsbC, PsbD, PsbE, PsbF, PsbH, PsbI, PsbJ, PsbK, PsbL, PsbM, PsbT, PsbX, PsbY, PsbZ, Psb30/Ycf12, at least 3 peripheral proteins of the oxygen-evolving complex and a large number of cofactors. It forms dimeric complexes.

It localises to the plastid. The protein localises to the chloroplast thylakoid membrane. In terms of biological role, one of the components of the core complex of photosystem II (PSII). PSII is a light-driven water:plastoquinone oxidoreductase that uses light energy to abstract electrons from H(2)O, generating O(2) and a proton gradient subsequently used for ATP formation. It consists of a core antenna complex that captures photons, and an electron transfer chain that converts photonic excitation into a charge separation. This subunit is found at the monomer-monomer interface and is required for correct PSII assembly and/or dimerization. This chain is Photosystem II reaction center protein L, found in Thalassiosira pseudonana (Marine diatom).